The sequence spans 122 residues: Large ribosomal subunit protein uL24 (122 aa).

Positions 43-64 (IRKHHRRDMPTPQGGTTKGGII) are disordered.

Belongs to the universal ribosomal protein uL24 family. In terms of assembly, part of the 50S ribosomal subunit.

One of two assembly initiator proteins, it binds directly to the 5'-end of the 23S rRNA, where it nucleates assembly of the 50S subunit. Functionally, one of the proteins that surrounds the polypeptide exit tunnel on the outside of the subunit. This Cutibacterium acnes (strain DSM 16379 / KPA171202) (Propionibacterium acnes) protein is Large ribosomal subunit protein uL24.